Reading from the N-terminus, the 448-residue chain is T-box transcription factor T homolog 1 (448 aa).

Residues 54-224 constitute a DNA-binding region (T-box); it reads LWDKFNALTN…YNPFAKAFLD (171 aa). Disordered stretches follow at residues 290 to 312 and 401 to 448; these read APYPHPYQRSSPPTNYGHDTAAS and TTAS…PPSL. The segment covering 417–442 has biased composition (polar residues); it reads STDSGYGHSTTPPAPQTRITSNNWSP.

Its subcellular location is the nucleus. Involved in the transcriptional regulation of genes required for mesoderm formation and differentiation. In Branchiostoma floridae (Florida lancelet), this protein is T-box transcription factor T homolog 1.